Reading from the N-terminus, the 258-residue chain is uncharacterized protein (258 aa).

The first 19 residues, Met-1–Ser-19, serve as a signal peptide directing secretion.

This is an uncharacterized protein from Escherichia coli (strain K12).